Consider the following 1219-residue polypeptide: FYVE, RhoGEF and PH domain-containing protein 5 (1219 aa).

Disordered stretches follow at residues 1–85, 94–113, 201–227, and 310–367; these read MGSP…SCQI, EEDF…PTES, SDTQ…GQVP, and GRES…PSSV. Residues 23–50 show a composition bias toward acidic residues; sequence EVFEEDSADAAEGEDQIEQEEPPNCDEE. Residues 201-214 are compositionally biased toward polar residues; the sequence is SDTQAASGTLSGYS. Basic and acidic residues predominate over residues 319–337; the sequence is REPEGAGLDSHRVRRKEDN. Positions 346–356 are enriched in polar residues; that stretch reads SSGSFSQRSHL. Over residues 357 to 367 the composition is skewed to low complexity; the sequence is PSSGTSTPSSV. Thr555 is modified (phosphothreonine). Residues 586 to 599 are compositionally biased toward low complexity; the sequence is ESKQQSSEQEAESA. Positions 586 to 644 are disordered; sequence ESKQQSSEQEAESAYTEPYKVCPISAAPREDLTSDEEQGSSEEEDSASRDPSLSHKGEG. Residues 618 to 630 are compositionally biased toward acidic residues; sequence TSDEEQGSSEEED. The span at 631 to 644 shows a compositional bias: basic and acidic residues; the sequence is SASRDPSLSHKGEG. The region spanning 647-840 is the DH domain; sequence RALVIAQELL…SKVTDRANES (194 aa). The PH 1 domain occupies 869–963; sequence EFLKEGTLMR…WHYCLSRALP (95 aa). The FYVE-type zinc-finger motif lies at 998 to 1057; sequence VTHAMMCMNCGCDFSLTVRRHHCHACGKIVCRNCSRNKYPLKCLKNRMAKVCDGCFRELK. The Zn(2+) site is built by Cys1004, Cys1007, Cys1020, Cys1023, Cys1028, Cys1031, Cys1049, and Cys1052. The 99-residue stretch at 1120 to 1218 folds into the PH 2 domain; sequence GSAISGYLSR…WMEAMEDASV (99 aa).

Expressed in highly vascularized tissues, such as lung, kidney and ovary.

Its subcellular location is the cytoplasm. It is found in the cytoskeleton. The protein localises to the cell projection. The protein resides in the ruffle membrane. It localises to the endoplasmic reticulum. Its subcellular location is the golgi apparatus. It is found in the early endosome. Functionally, activates CDC42, a member of the Ras-like family of Rho- and Rac proteins, by exchanging bound GDP for free GTP. Mediates VEGF-induced CDC42 activation. May regulate proangiogenic action of VEGF in vascular endothelial cells, including network formation, directional movement and proliferation. May play a role in regulating the actin cytoskeleton and cell shape. The sequence is that of FYVE, RhoGEF and PH domain-containing protein 5 (Fgd5) from Mus musculus (Mouse).